Reading from the N-terminus, the 111-residue chain is uncharacterized protein (111 aa).

It belongs to the SUI1 family.

This is an uncharacterized protein from Synechocystis sp. (strain ATCC 27184 / PCC 6803 / Kazusa).